Consider the following 307-residue polypeptide: MSDSTDSPAVLSAEEKRRLLRERRQAKMAKGQATDRLNNILSQGSSVKTTGVKSVLDEPQPTATSSAIHDEDPDIQDISEIASPPPPTPPIGEGSPENIDDIFQKMLQQQVQGKDGKVDPNDPIVQIMNMFKDGSGADGPQEGDVNANEFSNDPVENKYQQDLQAYDTYQQKLWKSRFLVIRVVVTLFNFFYHYLNVPSFHASNYSYVRDLAQDEFPVRNFFTWFAAFEVIIVLQYYTVFHKLGLFHAANQNSMIMKLMSMGSMVLPQLNTYQPLVARFLGYYELFGIIFGDLSLVIVLFGLLSFTK.

The Cytoplasmic segment spans residues M1–L173. The span at L41–V52 shows a compositional bias: polar residues. Residues L41–P73 form a disordered region. The helical transmembrane segment at W174 to Y194 threads the bilayer. Over L195–N220 the chain is Lumenal. Residues F221–F240 traverse the membrane as a helical segment. Over H241–E284 the chain is Cytoplasmic. The helical transmembrane segment at L285–F305 threads the bilayer. The Lumenal portion of the chain corresponds to T306–K307.

This sequence belongs to the GET2 family. Component of the Golgi to ER traffic (GET) complex, which is composed of GET1, GET2 and GET3. Within the complex, GET1 and GET2 form a heterotetramer which is stabilized by phosphatidylinositol binding and which binds to the GET3 homodimer.

It localises to the endoplasmic reticulum membrane. The protein resides in the golgi apparatus membrane. Its function is as follows. Required for the post-translational delivery of tail-anchored (TA) proteins to the endoplasmic reticulum. Together with GET1, acts as a membrane receptor for soluble GET3, which recognizes and selectively binds the transmembrane domain of TA proteins in the cytosol. The GET complex cooperates with the HDEL receptor ERD2 to mediate the ATP-dependent retrieval of resident ER proteins that contain a C-terminal H-D-E-L retention signal from the Golgi to the ER. In Candida tropicalis (strain ATCC MYA-3404 / T1) (Yeast), this protein is Golgi to ER traffic protein 2.